Here is a 639-residue protein sequence, read N- to C-terminus: Tubulin--tyrosine ligase-like protein 12 (639 aa).

A TTL domain is found at P295–I639. ATP-binding positions include S445–I448, K463, and D465.

The protein belongs to the tubulin--tyrosine ligase family. Interacts with MAVS; the interaction prevents MAVS binding to TBK1 and IKBKE. Interacts (via N-terminus) with TBK1 (via protein kinase domain). Interacts (via TTL domain) with IKBKE (via protein kinase domain). Interacts with tubulin alpha. Interacts with histone H3 and histone H4 (when trimethylated at 'Lys-20' (H4K20me3)). Interacts with CBX3. As to expression, widely expressed with highest levels in brain, kidney, liver, lung, muscle and testis.

The protein resides in the cytoplasm. It is found in the midbody. It localises to the cytoskeleton. Its subcellular location is the microtubule organizing center. The protein localises to the centrosome. The protein resides in the spindle. It is found in the nucleus. Negatively regulates post-translational modifications of tubulin, including detyrosination of the C-terminus and polyglutamylation of glutamate residues. Also, indirectly promotes histone H4 trimethylation at 'Lys-20' (H4K20me3). Probably by controlling tubulin and/or histone H4 post-translational modifications, plays a role in mitosis and in maintaining chromosome number stability. During RNA virus-mediated infection, acts as a negative regulator of the RIG-I pathway by preventing MAVS binding to TBK1 and IKBKE. In Mus musculus (Mouse), this protein is Tubulin--tyrosine ligase-like protein 12.